A 524-amino-acid polypeptide reads, in one-letter code: Cytochrome P450 704B1 (524 aa).

The helical transmembrane segment at 2 to 22 threads the bilayer; that stretch reads SLCLVIACMVTSWIFLHRWGQ. Cys471 is a heme binding site.

It belongs to the cytochrome P450 family. It depends on heme as a cofactor.

It localises to the membrane. It catalyses the reaction an omega-methyl-long-chain fatty acid + reduced [NADPH--hemoprotein reductase] + O2 = an omega-hydroxy-long-chain fatty acid + oxidized [NADPH--hemoprotein reductase] + H2O + H(+). Involved in pollen wall development. Catalyzes the conversion of long-chain fatty acids to the corresponding omega-hydroxylated fatty acids. Omega-hydroxylated fatty acids, together with in-chain hydroxylated fatty acids, are key monomeric aliphatic building blocks for sporopollenin synthesis during exine formation. The polypeptide is Cytochrome P450 704B1 (CYP704B1) (Arabidopsis thaliana (Mouse-ear cress)).